A 129-amino-acid chain; its full sequence is Small ribosomal subunit protein uS11 (129 aa).

This sequence belongs to the universal ribosomal protein uS11 family. Part of the 30S ribosomal subunit. Interacts with proteins S7 and S18. Binds to IF-3.

Functionally, located on the platform of the 30S subunit, it bridges several disparate RNA helices of the 16S rRNA. Forms part of the Shine-Dalgarno cleft in the 70S ribosome. This is Small ribosomal subunit protein uS11 from Geobacillus thermodenitrificans (strain NG80-2).